Here is a 269-residue protein sequence, read N- to C-terminus: 1-(5-phosphoribosyl)-5-[(5-phosphoribosylamino)methylideneamino] imidazole-4-carboxamide isomerase (269 aa).

The active-site Proton acceptor is the aspartate 10. Aspartate 132 (proton donor) is an active-site residue.

Belongs to the HisA/HisF family.

It is found in the cytoplasm. The catalysed reaction is 1-(5-phospho-beta-D-ribosyl)-5-[(5-phospho-beta-D-ribosylamino)methylideneamino]imidazole-4-carboxamide = 5-[(5-phospho-1-deoxy-D-ribulos-1-ylimino)methylamino]-1-(5-phospho-beta-D-ribosyl)imidazole-4-carboxamide. It participates in amino-acid biosynthesis; L-histidine biosynthesis; L-histidine from 5-phospho-alpha-D-ribose 1-diphosphate: step 4/9. This Xylella fastidiosa (strain Temecula1 / ATCC 700964) protein is 1-(5-phosphoribosyl)-5-[(5-phosphoribosylamino)methylideneamino] imidazole-4-carboxamide isomerase.